Consider the following 124-residue polypeptide: Large ribosomal subunit protein bL19 (124 aa).

This sequence belongs to the bacterial ribosomal protein bL19 family.

This protein is located at the 30S-50S ribosomal subunit interface and may play a role in the structure and function of the aminoacyl-tRNA binding site. The sequence is that of Large ribosomal subunit protein bL19 from Orientia tsutsugamushi (strain Boryong) (Rickettsia tsutsugamushi).